Consider the following 92-residue polypeptide: PqqA binding protein (92 aa).

Belongs to the PqqD family. In terms of assembly, monomer. Interacts with PqqE.

The protein operates within cofactor biosynthesis; pyrroloquinoline quinone biosynthesis. Functionally, functions as a PqqA binding protein and presents PqqA to PqqE, in the pyrroloquinoline quinone (PQQ) biosynthetic pathway. The sequence is that of PqqA binding protein from Azotobacter vinelandii (strain DJ / ATCC BAA-1303).